A 120-amino-acid chain; its full sequence is Small ribosomal subunit protein uS13 (120 aa).

A disordered region spans residues 92 to 120 (RRGLPCRGQRTRTNARTRKGPRKPIAGKK).

Belongs to the universal ribosomal protein uS13 family. As to quaternary structure, part of the 30S ribosomal subunit. Forms a loose heterodimer with protein S19. Forms two bridges to the 50S subunit in the 70S ribosome.

In terms of biological role, located at the top of the head of the 30S subunit, it contacts several helices of the 16S rRNA. In the 70S ribosome it contacts the 23S rRNA (bridge B1a) and protein L5 of the 50S subunit (bridge B1b), connecting the 2 subunits; these bridges are implicated in subunit movement. Contacts the tRNAs in the A and P-sites. The chain is Small ribosomal subunit protein uS13 from Laribacter hongkongensis (strain HLHK9).